Reading from the N-terminus, the 67-residue chain is Cold shock protein (67 aa).

The region spanning 4–64 is the CSD domain; the sequence is GTVKWFNAEK…GAKGPQATGV (61 aa).

It is found in the cytoplasm. The sequence is that of Cold shock protein (csp) from Arthrobacter globiformis.